Reading from the N-terminus, the 452-residue chain is Exodeoxyribonuclease 7 large subunit (452 aa).

It belongs to the XseA family. Heterooligomer composed of large and small subunits.

The protein resides in the cytoplasm. The catalysed reaction is Exonucleolytic cleavage in either 5'- to 3'- or 3'- to 5'-direction to yield nucleoside 5'-phosphates.. Functionally, bidirectionally degrades single-stranded DNA into large acid-insoluble oligonucleotides, which are then degraded further into small acid-soluble oligonucleotides. The polypeptide is Exodeoxyribonuclease 7 large subunit (Bacillus cereus (strain B4264)).